Consider the following 249-residue polypeptide: Cytokine-inducible SH2-containing protein (249 aa).

A disordered region spans residues alanine 41–aspartate 64. In terms of domain architecture, SH2 spans tryptophan 84–tyrosine 165. The SOCS box domain maps to lysine 200–glutamine 248.

It participates in protein modification; protein ubiquitination. Functionally, SOCS family proteins form part of a classical negative feedback system that regulates cytokine signal transduction. CIS is involved in the negative regulation of cytokines that signal through the JAK-STAT5 pathway such as erythropoietin, prolactin and interleukin 3 (IL3) receptor. Inhibits STAT5 trans-activation by suppressing its tyrosine phosphorylation. May be a substrate-recognition component of a SCF-like ECS (Elongin BC-CUL2/5-SOCS-box protein) E3 ubiquitin-protein ligase complex which mediates the ubiquitination and subsequent proteasomal degradation of target proteins. The polypeptide is Cytokine-inducible SH2-containing protein (CISH) (Gallus gallus (Chicken)).